Reading from the N-terminus, the 334-residue chain is Ficolin-1 (334 aa).

The N-terminal stretch at 1-17 is a signal peptide; that stretch reads MQWPTLWAFSGLLCLCP. The disordered stretch occupies residues 47–117; sequence SCPGFPGPPG…SLGEKELGDT (71 aa). The region spanning 50-88 is the Collagen-like domain; it reads GFPGPPGPKGEPGSPAGRGERGFQGSPGKMGPAGSKGEP. The 218-residue stretch at 117-334 folds into the Fibrinogen C-terminal domain; sequence TLCQRGPRSC…KVAEMKIRAS (218 aa). 2 cysteine pairs are disulfide-bonded: C119/C147 and C126/C154. The a domain; contributes to trimerization stretch occupies residues 123–162; the sequence is PRSCKDLLTRGIFLTGWYTIHLPDCRPLTVLCDMDVDGGG. The interval 163–251 is b domain; contributes to trimerization; sequence WTVFQRRVDG…LTLGQFLEGT (89 aa). N261 is a glycosylation site (N-linked (GlcNAc...) asparagine). D270 and D272 together coordinate Ca(2+). Cysteines 278 and 291 form a disulfide. 290-292 contacts a carbohydrate; sequence NCH. A p domain region spans residues 325 to 334; it reads KVAEMKIRAS.

This sequence belongs to the ficolin lectin family. In terms of assembly, homotrimer. Interacts with elastin/ELN. Interacts (via Fibrinogen C-terminal domain) with FFAR2. Interacts with CRP; may regulate monocyte activation by FCN1. As to expression, highly expressed in liver and spleen.

Its subcellular location is the secreted. It is found in the cell membrane. Functionally, extracellular lectin functioning as a pattern-recognition receptor in innate immunity. Binds the sugar moieties of pathogen-associated molecular patterns (PAMPs) displayed on microbes and activates the lectin pathway of the complement system. May also activate monocytes through a G protein-coupled receptor, FFAR2, inducing the secretion of interleukin-8/IL-8. Binds preferentially to 9-O-acetylated 2-6-linked sialic acid derivatives and to various glycans containing sialic acid engaged in a 2-3 linkage. The polypeptide is Ficolin-1 (Fcn1) (Mus musculus (Mouse)).